We begin with the raw amino-acid sequence, 1034 residues long: MSSNTVAQFATELKMPANVLLEQLRAAGVDLKSVDDSVTDSDKAKLLDSLRRAHGATDGKKITLTRRQTSEIRQADATGRSRTIQVEVRKKRVFVKRDPAELAAEAAAEAKAAAEQAAAEAVDMQPESVEAQAPAPQSVEALAQAPVEAVKPVEAEAPKIETPPVETPAVEAVEAAAPKIEASEAPAEPVQTQTAQAVEETPAPAETPEPVPAVKAEAEPQSAQPAASREQSTAQPVEPEAKKESVAAPKTQEAGPESVVHAQTDLNSKTPAPVAKSETAPSAPKAAQGRPQVAEAARPPVVNDRAREDARRAAEAEAAALREMLNRPRKVLRAPEPEPAGTNNAALSGTLHKPAGKKDAAAAPAAAPKKEGGNKPAAAGAGGKKVIKTAEVSSTWNDDASRKKPADKAAAPGGNSRDGWRSGGKGGGKNSRNGRNQHQDRRNESAAQEFIAREIHVPETISVADLAHKMSVKAAEVIKQLMKLGQMVTINQVLDQETAMIVVEELGHVAIAAKLDDPEAFLDETPGVSEAEALPRAPVVTVMGHVDHGKTSLLDYIRRAKVAAGEAGGITQHIGAYHVETDRGSVTFLDTPGHEAFTAMRARGAKATDIVILVVAADDGVMPQTREAIHHAKAAGVPLVVAVNKIDKPEANPDRVKQELVAEQVVPEEYGGDVPFVPVSAKTGAGIDDLLENVLLQAEILELTAPVEAAAKGIVIEARLDKGRGPVATILVQSGTLKRGDVVLAGASFGRVRAMLDENGKQVQSAGPSIPVEIQGLTEVPAAGDELISLSDERRAREIALFRQGKFRDVKLARQQAAKLESMFDNMGEGTQTLPLIVKTDVQGSQEALVAALTKLSTDEVRVQVVHAAVGGISESDVNLAIASNAVVIGFNVRADQSAKKLADNNGIDLRYYNIIYDAVDEVKAAMSGMLAPEKREEIIGLVEVREVYTISRIGTVAGCMVLDGLVRRDSQVRLLRNNVVTWTGQLDSLRRFKDDVKEVKSGFDCGLTLRGNNDLQMGDQLEVFEIKEIARTL.

Disordered regions lie at residues 118-140 (AAEAVDMQPESVEAQAPAPQSVE) and 154-446 (EAEA…NESA). Low complexity-rich tracts occupy residues 162 to 178 (TPPVETPAVEAVEAAAP) and 212 to 228 (PAVKAEAEPQSAQPAAS). The span at 304 to 315 (DRAREDARRAAE) shows a compositional bias: basic and acidic residues. The region spanning 535-702 (PRAPVVTVMG…NVLLQAEILE (168 aa)) is the tr-type G domain. The tract at residues 544–551 (GHVDHGKT) is G1. 544 to 551 (GHVDHGKT) contacts GTP. The G2 stretch occupies residues 569–573 (GITQH). The tract at residues 590 to 593 (DTPG) is G3. GTP contacts are provided by residues 590–594 (DTPGH) and 644–647 (NKID). Positions 644–647 (NKID) are G4. The G5 stretch occupies residues 680 to 682 (SAK).

It belongs to the TRAFAC class translation factor GTPase superfamily. Classic translation factor GTPase family. IF-2 subfamily.

Its subcellular location is the cytoplasm. Its function is as follows. One of the essential components for the initiation of protein synthesis. Protects formylmethionyl-tRNA from spontaneous hydrolysis and promotes its binding to the 30S ribosomal subunits. Also involved in the hydrolysis of GTP during the formation of the 70S ribosomal complex. This Bordetella avium (strain 197N) protein is Translation initiation factor IF-2.